The chain runs to 142 residues: Hemoglobin subunit alpha-A (142 aa).

The Globin domain occupies 2-142 (VLSAADKTNV…VATVLTAKYR (141 aa)). Position 59 (His59) interacts with O2. His88 is a binding site for heme b.

This sequence belongs to the globin family. In terms of assembly, heterotetramer of two alpha chains and two beta chains. As to expression, red blood cells.

Functionally, involved in oxygen transport from the lung to the various peripheral tissues. The sequence is that of Hemoglobin subunit alpha-A (HBAA) from Apus apus (Common swift).